The chain runs to 58 residues: Temporin-1Th (58 aa).

The first 22 residues, M1 to C22, serve as a signal peptide directing secretion. The propeptide occupies E23 to R46. A disordered region spans residues E25–R46. A Leucine amide modification is found at L56.

In terms of tissue distribution, expressed by the skin glands.

Its subcellular location is the secreted. Functionally, antimicrobial peptide that renders both the outer and inner membrane of bacteria permeable to hydrophobic substances of low molecular mass. The chain is Temporin-1Th from Rana temporaria (European common frog).